A 291-amino-acid chain; its full sequence is Probable cell wall amidase LytH (291 aa).

The signal sequence occupies residues 1 to 40 (MKKIEAWLSKKGLKNKRTLIVVIAFVLFIIFLFLLLNSNS). One can recognise an SH3b domain in the interval 41-105 (EDSGNITITE…WIAGWHTNLD (65 aa)). A disordered region spans residues 118–140 (QGKTIVLDPGHGGSDQGASSNTK). The MurNAc-LAA domain occupies 122-286 (IVLDPGHGGS…LEQAIVDGLK (165 aa)).

The protein belongs to the N-acetylmuramoyl-L-alanine amidase 3 family.

Its subcellular location is the secreted. In terms of biological role, probably involved in cell-wall metabolism. This Staphylococcus aureus (strain USA300) protein is Probable cell wall amidase LytH (lytH).